The sequence spans 162 residues: Disulfide bond formation protein B (162 aa).

Residues 1–8 (MTPLFRKA) lie on the Cytoplasmic side of the membrane. The helical transmembrane segment at 9–25 (VWLLFAVSVCAFAGSLA) threads the bilayer. Over 26 to 43 (AQYVLGMEPCVLCISQRL) the chain is Periplasmic. Cysteines 35 and 38 form a disulfide. Residues 44–60 (CVLATALCAAIVLMCRP) form a helical membrane-spanning segment. Residues 61–67 (RRKAGGL) are Cytoplasmic-facing. Residues 68–85 (FGAVFISIPAVTGISVAA) form a helical membrane-spanning segment. Residues 86–141 (YQLWLQSLPPGTAPSCGAPWTFRLKGWPLFDWFEPVVRGFGNCAEPDYLLGVALPV) are Periplasmic-facing. Cys101 and Cys128 are oxidised to a cystine. The helical transmembrane segment at 142–160 (WSVAYFLAVALTVWWAWAR) threads the bilayer. Topologically, residues 161–162 (AK) are cytoplasmic.

The protein belongs to the DsbB family.

The protein resides in the cell inner membrane. Its function is as follows. Required for disulfide bond formation in some periplasmic proteins. Acts by oxidizing the DsbA protein. In Neisseria meningitidis serogroup A / serotype 4A (strain DSM 15465 / Z2491), this protein is Disulfide bond formation protein B.